A 353-amino-acid chain; its full sequence is Pleckstrin-2 (353 aa).

The residue at position 1 (Met1) is an N-acetylmethionine. A PH 1 domain is found at Gly4 to His104. The residue at position 120 (Ser120) is a Phosphoserine. Residues Ser139–Glu225 form the DEP domain. The 107-residue stretch at Thr247–Thr353 folds into the PH 2 domain.

The protein resides in the cell projection. Its subcellular location is the lamellipodium membrane. The protein localises to the cytoplasm. It is found in the cytoskeleton. Functionally, may help orchestrate cytoskeletal arrangement. Contribute to lamellipodia formation. In Homo sapiens (Human), this protein is Pleckstrin-2 (PLEK2).